Consider the following 597-residue polypeptide: Histidine protein kinase DivJ (597 aa).

A run of 6 helical transmembrane segments spans residues 40-57, 62-81, 91-109, 110-125, 137-158, and 159-188; these read LGWL…LFTA, WPVW…SLIF, WLLV…LTGG, VGGA…VAAA, GAAL…GLAP, and AAPT…LLIG. The Histidine kinase domain occupies 335-553; the sequence is NMSHELRTPL…TVSVRLPVLL (219 aa). A Phosphohistidine; by autocatalysis modification is found at histidine 338. Over residues 561-585 the composition is skewed to pro residues; sequence PTPPAAPEAPSAPEPAPTVEEPPPA. Residues 561–597 are disordered; the sequence is PTPPAAPEAPSAPEPAPTVEEPPPASLGDNVIAFAPR.

It is found in the cell membrane. It catalyses the reaction ATP + protein L-histidine = ADP + protein N-phospho-L-histidine.. Functionally, kinase required for the regulation of cell division and differentiation. Is part of a signal transduction pathway, activating PleD by phosphorylation. This chain is Histidine protein kinase DivJ (divJ), found in Caulobacter vibrioides (strain ATCC 19089 / CIP 103742 / CB 15) (Caulobacter crescentus).